Here is a 282-residue protein sequence, read N- to C-terminus: Blarina toxin (282 aa).

The first 17 residues, 1–17, serve as a signal peptide directing secretion; it reads MCFLLLCLTLTLAGTGA. Residues 18–29 constitute a propeptide, activation peptide; it reads VPTGPSIEIHSR. In terms of domain architecture, Peptidase S1 spans 30 to 279; that stretch reads IIGGWECDKH…YISWIQETIK (250 aa). Intrachain disulfides connect cysteine 36–cysteine 194, cysteine 57–cysteine 73, cysteine 170–cysteine 240, cysteine 205–cysteine 219, and cysteine 230–cysteine 255. The Charge relay system role is filled by histidine 72. O-linked (GalNAc...) serine glycosylation occurs at serine 100. N-linked (GlcNAc...) asparagine glycans are attached at residues asparagine 109 and asparagine 122. Aspartate 138 functions as the Charge relay system in the catalytic mechanism. Serine 234 acts as the Charge relay system in catalysis.

The protein belongs to the peptidase S1 family. Kallikrein subfamily. Submaxillary and sublingual salivary glands.

It localises to the secreted. With respect to regulation, strongly inhibited by aprotinin, moderately inhibited by secretory leukoprotease inhibitor, the Kunitz-type soybean trypsin inhibitor, and leupeptin, and not inhibited by urinary trypsin inhibitor or alpha-1 protease inhibitor. In terms of biological role, has kallikrein-like activity, converts kininogens to kinins, and has dilatory effects on the blood vessel walls. Shows highest activity toward Pro-Phe-Arg-MCA and Boc-Val-Leu-Lys-MCA in vitro. Has preference for Arg and Lys in position P1 and hydrophobic residues in position P2. The polypeptide is Blarina toxin (BTX) (Blarina brevicauda (Northern short-tailed shrew)).